Consider the following 129-residue polypeptide: Replication initiation control protein YabA (129 aa).

Zn(2+)-binding residues include His103, Cys105, Cys119, and Cys122.

Belongs to the YabA family. As to quaternary structure, homotetramer. Interacts with both DnaA and DnaN, acting as a bridge between these two proteins. It depends on Zn(2+) as a cofactor.

It is found in the cytoplasm. Its subcellular location is the nucleoid. In terms of biological role, involved in control of chromosome replication initiation. Inhibits the cooperative binding of DnaA to the oriC region, thus negatively regulating initiation of chromosome replication. Inhibits the ability of DnaA-ATP to form a helix on DNA; does not disassemble preformed DnaA-DNA helices. Decreases the residence time of DnaA on the chromosome at its binding sites (oriC, replication forks and promoter-binding sites). Tethers DnaA to the replication machinery via the DNA polymerase beta sliding clamp subunit (dnaN). Associates with oriC and other DnaA targets on the chromosome in a DnaA-dependent manner. The polypeptide is Replication initiation control protein YabA (Listeria monocytogenes serotype 4b (strain CLIP80459)).